Reading from the N-terminus, the 87-residue chain is Probable acyl carrier protein PigG (87 aa).

Residues 1–78 (MLESKLINHI…SMVALVQRLK (78 aa)) enclose the Carrier domain. Residue S36 is modified to O-(pantetheine 4'-phosphoryl)serine.

It participates in antibiotic biosynthesis; prodigiosin biosynthesis. Its function is as follows. Involved in the biosynthesis of 4-methoxy-2,2'-bipyrrole-5-carbaldehyde (MBC), one of the terminal products involved in the biosynthesis of the red antibiotic prodigiosin (Pig). Carrier of the L-prolyl group transferred from L-prolyl-AMP by PigI. This chain is Probable acyl carrier protein PigG, found in Serratia sp. (strain ATCC 39006) (Prodigiosinella confusarubida).